The following is a 557-amino-acid chain: MAQSRVTDFYACRRPGLTTPRAKSICLTPSPGGLVAPAFTRSSSRKRARPPAEPGSDQPAPLARRRLRLPGLDSCPSSLPEPSSPAEPSPPADPSPPADPGSPVCPSPVKRTKSTTVYVGQQPGKIPSEDSVSELQSCLRRARKLGAQARALRARVQENAVEPSTPDAKVPTEQPCVEKAPAYQRFHALAQPGLPGLVLPYKYQVLVEMFRSMDTIVSMLHNRSETVTFAKVKQGVQEMMRKRFEERNVGQIKTVYPTSYRFRQECNVPTFKDSIKRSDYQLTIEPLLGQEAGGATQLTATCLLQRRQVFRQNLVERVKEQHKVFLASLNPPMAVPDDQLTRWHPRFNVDEVPDIEPAELPQPPVTEKLTTAQEVLARARSLMTPKMEKALSNLALRSAEPGSPGTSTPPLPATPPATPPAASPSALKGVSQALLERIRAKEVQKQLARMTRCPEQELRLQRLERLPELARVLRNVFVSERKPALTMEVVCARMVDSCQTALSPGEMEKHLVLLAELLPDWLSLHRIRTDTYVKLDKAVDLAGLTARLAHHVHAEGL.

The PIP-box K+4 motif motif lies at 1–25 (MAQSRVTDFYACRRPGLTTPRAKSI). Positions 20–113 (PRAKSICLTP…VCPSPVKRTK (94 aa)) are disordered. Thr-28 bears the Phosphothreonine; by MAPK8 mark. Ser-30 is subject to Phosphoserine. The Cyclin-binding motif motif lies at 65–67 (RRL). Residues 69 to 81 (LPGLDSCPSSLPE) show a composition bias toward low complexity. A compositionally biased stretch (pro residues) spans 82–106 (PSSPAEPSPPADPSPPADPGSPVCP). Position 107 is a phosphoserine; by MAPK8 (Ser-107). Residues 163–203 (PSTPDAKVPTEQPCVEKAPAYQRFHALAQPGLPGLVLPYKY) form an interaction with GMNN region. A Phosphoserine modification is found at Ser-392. The disordered stretch occupies residues 397–427 (RSAEPGSPGTSTPPLPATPPATPPAASPSAL). Pro residues predominate over residues 407–422 (STPPLPATPPATPPAA). The tract at residues 463 to 557 (LERLPELARV…LAHHVHAEGL (95 aa)) is interaction with LRWD1.

The protein belongs to the Cdt1 family. Interacts with GMNN; the interaction inhibits the binding of the MCM complex to origins of replication. Interacts with MCM6. Interacts with CDC6; are mutually dependent on one another for loading MCM complexes onto chromatin. Interacts with PCNA. Interacts with LRWD1 during G1 phase and during mitosis. Interacts with NDC80 subunit of the NDC80 complex; leading to kinetochore localization. Interacts with KAT7. Interacts with ubiquitin-binding protein FAF1; the interaction is likely to promote CDT1 degradation. Post-translationally, two independent E3 ubiquitin ligase complexes, SCF(SKP2) and the DCX(DTL) complex, mediated CDT1 degradation in S phase. Ubiquitinated by the DCX(DTL) complex, in response to DNA damage, leading to its degradation. Ubiquitination by the DCX(DTL) complex is necessary to ensure proper cell cycle regulation and is PCNA-dependent: interacts with PCNA via its PIP-box, while the presence of the containing the 'K+4' motif in the PIP box, recruit the DCX(DTL) complex, leading to its degradation. Phosphorylation at Thr-28 by CDK2 targets CDT1 for ubiquitynation by SCF(SKP2) E3 ubiquitin ligase and subsequent degradation. The interaction with GMNN protects it against ubiquitination. Deubiquitinated by USP37. Ubiquitinated and degraded by the SCF(FBXO31) complex during the G2 phase to prevent re-replication. Phosphorylation by cyclin A-dependent kinases at Thr-28 targets CDT1 for ubiquitynation by SCF(SKP2) E3 ubiquitin ligase and subsequent degradation. Phosphorylated at Thr-28 by MAPK8/JNK1, which blocks replication licensing in response to stress. Binding to GMNN is not affected by phosphorylation.

It localises to the nucleus. It is found in the chromosome. The protein localises to the centromere. Its subcellular location is the kinetochore. Required for both DNA replication and mitosis. DNA replication licensing factor, required for pre-replication complex assembly. Cooperates with CDC6 and the origin recognition complex (ORC) during G1 phase of the cell cycle to promote the loading of the mini-chromosome maintenance (MCM) complex onto DNA to generate pre-replication complexes (pre-RC). Required also for mitosis by promoting stable kinetochore-microtubule attachments. Potential oncogene. The protein is DNA replication factor Cdt1 of Mus musculus (Mouse).